The following is a 239-amino-acid chain: Probable phosphatase Csac_1188 (239 aa).

Positions 8, 10, 16, 41, 74, 102, 132, 192, and 194 each coordinate Zn(2+).

This sequence belongs to the PHP family. The cofactor is Zn(2+).

The sequence is that of Probable phosphatase Csac_1188 from Caldicellulosiruptor saccharolyticus (strain ATCC 43494 / DSM 8903 / Tp8T 6331).